Consider the following 273-residue polypeptide: Putative peptidyl-prolyl cis-trans isomerase Cbf2 (273 aa).

An N-terminal signal peptide occupies residues 1-21; that stretch reads MKKFSLVAATLIAGVVLNVNA. The region spanning 131 to 228 is the PpiC domain; that stretch reads PARVQAKHIL…FGYHVILKEN (98 aa).

The enzyme catalyses [protein]-peptidylproline (omega=180) = [protein]-peptidylproline (omega=0). In Campylobacter jejuni subsp. jejuni serotype O:2 (strain ATCC 700819 / NCTC 11168), this protein is Putative peptidyl-prolyl cis-trans isomerase Cbf2 (cbf2).